A 390-amino-acid polypeptide reads, in one-letter code: Small ribosomal subunit protein uS9m (390 aa).

The interval 368–390 (PRIRERKKPGQEGARRKFTWKKR) is disordered.

It belongs to the universal ribosomal protein uS9 family. As to quaternary structure, component of the mitochondrial ribosome small subunit (28S) which comprises a 12S rRNA and about 30 distinct proteins.

It localises to the mitochondrion. In Mus musculus (Mouse), this protein is Small ribosomal subunit protein uS9m (Mrps9).